A 671-amino-acid polypeptide reads, in one-letter code: DNA ligase (671 aa).

Residues 36-40, 85-86, and glutamate 116 contribute to the NAD(+) site; these read DAEYD and SL. Catalysis depends on lysine 118, which acts as the N6-AMP-lysine intermediate. NAD(+) is bound by residues arginine 139, glutamate 176, lysine 292, and lysine 316. Zn(2+)-binding residues include cysteine 410, cysteine 413, cysteine 428, and cysteine 434. In terms of domain architecture, BRCT spans 591–671; sequence QKGGRFQGMT…QFLAMFSEKE (81 aa).

The protein belongs to the NAD-dependent DNA ligase family. LigA subfamily. Requires Mg(2+) as cofactor. The cofactor is Mn(2+).

The catalysed reaction is NAD(+) + (deoxyribonucleotide)n-3'-hydroxyl + 5'-phospho-(deoxyribonucleotide)m = (deoxyribonucleotide)n+m + AMP + beta-nicotinamide D-nucleotide.. Its function is as follows. DNA ligase that catalyzes the formation of phosphodiester linkages between 5'-phosphoryl and 3'-hydroxyl groups in double-stranded DNA using NAD as a coenzyme and as the energy source for the reaction. It is essential for DNA replication and repair of damaged DNA. This chain is DNA ligase, found in Acidithiobacillus ferrooxidans (strain ATCC 23270 / DSM 14882 / CIP 104768 / NCIMB 8455) (Ferrobacillus ferrooxidans (strain ATCC 23270)).